We begin with the raw amino-acid sequence, 200 residues long: NADH-quinone oxidoreductase subunit B 2 (200 aa).

Cysteine 79, cysteine 80, cysteine 144, and cysteine 174 together coordinate [4Fe-4S] cluster.

This sequence belongs to the complex I 20 kDa subunit family. As to quaternary structure, NDH-1 is composed of 14 different subunits. Subunits NuoB, C, D, E, F, and G constitute the peripheral sector of the complex. [4Fe-4S] cluster is required as a cofactor.

It localises to the cell inner membrane. It carries out the reaction a quinone + NADH + 5 H(+)(in) = a quinol + NAD(+) + 4 H(+)(out). NDH-1 shuttles electrons from NADH, via FMN and iron-sulfur (Fe-S) centers, to quinones in the respiratory chain. The immediate electron acceptor for the enzyme in this species is believed to be ubiquinone. Couples the redox reaction to proton translocation (for every two electrons transferred, four hydrogen ions are translocated across the cytoplasmic membrane), and thus conserves the redox energy in a proton gradient. This Rhodopseudomonas palustris (strain BisA53) protein is NADH-quinone oxidoreductase subunit B 2.